A 422-amino-acid chain; its full sequence is Putative polyketide beta-ketoacyl synthase 1 (422 aa).

The Ketosynthase family 3 (KS3) domain occupies 2-416 (SRRVVVTGIG…GFQSAVVLTG (415 aa)). Active-site for beta-ketoacyl synthase activity residues include Cys-169, His-309, and His-346.

It belongs to the thiolase-like superfamily. Beta-ketoacyl-ACP synthases family.

Involved in developmentally regulated synthesis of a compound biosynthetically related to polyketide antibiotics which is essential for spore color in Streptomyces halstedii. In Streptomyces halstedii, this protein is Putative polyketide beta-ketoacyl synthase 1 (sch1).